A 195-amino-acid chain; its full sequence is Dephospho-CoA kinase (195 aa).

A DPCK domain is found at 3–195 (IIGLTGSIAM…LFVIKSLLKN (193 aa)). 11–16 (AMGKST) provides a ligand contact to ATP.

The protein belongs to the CoaE family.

The protein localises to the cytoplasm. It catalyses the reaction 3'-dephospho-CoA + ATP = ADP + CoA + H(+). It participates in cofactor biosynthesis; coenzyme A biosynthesis; CoA from (R)-pantothenate: step 5/5. Functionally, catalyzes the phosphorylation of the 3'-hydroxyl group of dephosphocoenzyme A to form coenzyme A. The sequence is that of Dephospho-CoA kinase from Bartonella henselae (strain ATCC 49882 / DSM 28221 / CCUG 30454 / Houston 1) (Rochalimaea henselae).